Here is a 188-residue protein sequence, read N- to C-terminus: Accessory gene regulator protein B (188 aa).

The next 4 helical transmembrane spans lie at 49–69 (VALI…YFLV), 100–122 (VYFQ…LIIY), 143–163 (LLSI…PEPF), and 164–184 (KQLI…IFFP).

It belongs to the AgrB family.

The protein resides in the cell membrane. Essential for the production of a quorum sensing system signal molecule, the autoinducing peptide (AIP). This quorum sensing system is responsible for the regulation of the expression of virulence factor genes. Involved in the proteolytic processing of AgrD, the precursor of AIP. This chain is Accessory gene regulator protein B, found in Staphylococcus haemolyticus (strain JCSC1435).